We begin with the raw amino-acid sequence, 198 residues long: Putative pseudouridine methyltransferase (198 aa).

The S-adenosyl-L-methionine site is built by methionine 132 and cysteine 186.

Belongs to the methyltransferase superfamily. TrmY family.

It localises to the cytoplasm. The chain is Putative pseudouridine methyltransferase from Shewanella baltica (strain OS223).